We begin with the raw amino-acid sequence, 404 residues long: Cysteine desulfurase IscS (404 aa).

Residues 75–76 (AT), asparagine 155, glutamine 183, and 203–205 (SGH) each bind pyridoxal 5'-phosphate. An N6-(pyridoxal phosphate)lysine modification is found at lysine 206. Threonine 243 serves as a coordination point for pyridoxal 5'-phosphate. The active-site Cysteine persulfide intermediate is the cysteine 328. Cysteine 328 lines the [2Fe-2S] cluster pocket.

This sequence belongs to the class-V pyridoxal-phosphate-dependent aminotransferase family. NifS/IscS subfamily. Homodimer. Forms a heterotetramer with IscU, interacts with other sulfur acceptors. It depends on pyridoxal 5'-phosphate as a cofactor.

Its subcellular location is the cytoplasm. The enzyme catalyses (sulfur carrier)-H + L-cysteine = (sulfur carrier)-SH + L-alanine. It participates in cofactor biosynthesis; iron-sulfur cluster biosynthesis. In terms of biological role, master enzyme that delivers sulfur to a number of partners involved in Fe-S cluster assembly, tRNA modification or cofactor biosynthesis. Catalyzes the removal of elemental sulfur atoms from cysteine to produce alanine. Functions as a sulfur delivery protein for Fe-S cluster synthesis onto IscU, an Fe-S scaffold assembly protein, as well as other S acceptor proteins. This Edwardsiella ictaluri (strain 93-146) protein is Cysteine desulfurase IscS.